The primary structure comprises 270 residues: Triosephosphate isomerase (270 aa).

A substrate-binding site is contributed by 27 to 29; it reads NWK. H114 serves as the catalytic Electrophile. Catalysis depends on E184, which acts as the Proton acceptor. Residues G190, S230, and 251 to 252 each bind substrate; that span reads GG.

Belongs to the triosephosphate isomerase family. As to quaternary structure, homodimer.

It localises to the cytoplasm. The catalysed reaction is D-glyceraldehyde 3-phosphate = dihydroxyacetone phosphate. Its pathway is carbohydrate biosynthesis; gluconeogenesis. The protein operates within carbohydrate degradation; glycolysis; D-glyceraldehyde 3-phosphate from glycerone phosphate: step 1/1. Its function is as follows. Involved in the gluconeogenesis. Catalyzes stereospecifically the conversion of dihydroxyacetone phosphate (DHAP) to D-glyceraldehyde-3-phosphate (G3P). The chain is Triosephosphate isomerase from Chlamydia muridarum (strain MoPn / Nigg).